A 180-amino-acid chain; its full sequence is Regulator of G-protein signaling 8 (180 aa).

The residue at position 26 (Ser26) is a Phosphoserine. The RGS domain occupies 56 to 171 (SFDVLLSHKY…FLRSKMYLDL (116 aa)).

As to quaternary structure, interacts with GNAO1 and GNAI3.

The protein resides in the cell membrane. It is found in the membrane. Its subcellular location is the perikaryon. The protein localises to the cell projection. It localises to the dendrite. The protein resides in the nucleus. Its function is as follows. Regulates G protein-coupled receptor signaling cascades, including signaling via muscarinic acetylcholine receptor CHRM2 and dopamine receptor DRD2. Inhibits signal transduction by increasing the GTPase activity of G protein alpha subunits, thereby driving them into their inactive GDP-bound form. Modulates the activity of potassium channels that are activated in response to DRD2 and CHRM2 signaling. This is Regulator of G-protein signaling 8 (Rgs8) from Mus musculus (Mouse).